The following is a 617-amino-acid chain: Proline--tRNA ligase (617 aa).

The protein belongs to the class-II aminoacyl-tRNA synthetase family. ProS type 1 subfamily. In terms of assembly, homodimer.

The protein resides in the cytoplasm. The enzyme catalyses tRNA(Pro) + L-proline + ATP = L-prolyl-tRNA(Pro) + AMP + diphosphate. Catalyzes the attachment of proline to tRNA(Pro) in a two-step reaction: proline is first activated by ATP to form Pro-AMP and then transferred to the acceptor end of tRNA(Pro). As ProRS can inadvertently accommodate and process non-cognate amino acids such as alanine and cysteine, to avoid such errors it has two additional distinct editing activities against alanine. One activity is designated as 'pretransfer' editing and involves the tRNA(Pro)-independent hydrolysis of activated Ala-AMP. The other activity is designated 'posttransfer' editing and involves deacylation of mischarged Ala-tRNA(Pro). The misacylated Cys-tRNA(Pro) is not edited by ProRS. The sequence is that of Proline--tRNA ligase from Streptococcus pneumoniae (strain CGSP14).